The following is a 609-amino-acid chain: N-acetyltransferase ESCO2 (609 aa).

Disordered stretches follow at residues 1–71, 100–165, 197–241, and 314–357; these read MLSR…RVSP, EAKS…TDQV, KKPT…SPVR, and PDHD…LTAT. Polar residues-rich tracts occupy residues 13 to 22 and 41 to 54; these read AESNPSKKQI and ISLN…STPK. Positions 126–135 are enriched in basic residues; the sequence is PAKKVQKKPR. The span at 214 to 230 shows a compositional bias: basic and acidic residues; sequence PTYEKPSIRKPVREKEL. Over residues 345–355 the composition is skewed to polar residues; the sequence is PLNSSTPSALT. A CCHH-type zinc finger spans residues 392-416; the sequence is TTCASCGMLYSTDSPEDNFQHTQFH.

This sequence belongs to the acetyltransferase family. ECO subfamily.

The protein resides in the nucleus. The protein localises to the chromosome. It catalyses the reaction L-lysyl-[protein] + acetyl-CoA = N(6)-acetyl-L-lysyl-[protein] + CoA + H(+). Acetyltransferase required for the establishment of sister chromatid cohesion. Couples the processes of cohesion and DNA replication to ensure that only sister chromatids become paired together. Essential for early development. In Danio rerio (Zebrafish), this protein is N-acetyltransferase ESCO2 (esco2).